Consider the following 72-residue polypeptide: uncharacterized protein (72 aa).

The helical transmembrane segment at 11-31 (WCCTVLSAFGVVILSVIAHLF) threads the bilayer.

Its subcellular location is the membrane. This is an uncharacterized protein from Saccharomyces cerevisiae (strain ATCC 204508 / S288c) (Baker's yeast).